A 467-amino-acid polypeptide reads, in one-letter code: Transcriptional regulator of yeast form adherence 6 (467 aa).

Residues 43–52 (NTSDAGSIPT) show a composition bias toward polar residues. 5 disordered regions span residues 43–83 (NTSD…NIDS), 128–149 (GSSG…NSNN), 245–275 (ESPE…SNSS), 312–365 (NNQL…SGSK), and 390–439 (STLN…DNDR). The 82-residue stretch at 92 to 173 (ETKQLHSIIE…KSSVEYILYL (82 aa)) folds into the bHLH domain. Low complexity-rich tracts occupy residues 257–275 (VSET…SNSS) and 312–322 (NNQLNNRKNSN). The span at 323-338 (PISPQTVCIKSQNPSP) shows a compositional bias: polar residues. Positions 345–365 (SSLSTSIVNSPSSSSSLSGSK) are enriched in low complexity. The span at 417 to 432 (GSANTETVNSGSASSD) shows a compositional bias: polar residues.

It is found in the nucleus. Its function is as follows. Transcription factor required for yeast cell adherence to silicone substrate. This is Transcriptional regulator of yeast form adherence 6 (TRY6) from Candida albicans (strain SC5314 / ATCC MYA-2876) (Yeast).